The following is a 486-amino-acid chain: MSFRKVVRQSKFRHVFGQPVKNDQCYEDIRVSRVTWDSTFCAVNPKFLAVIVEASGGGAFLVLPLSKTGRIDKAYPTVCGHTGPVLDIEWCPHNDGVIASGSEDCTVMVWQIPEDGLTSPLTEPVVVLEGHTKRVGIVTWHPTARNVLLSAGCDNVVLIWNVGTAEELYRLDSLHPDLIYNVSWNRNGSLFCSACKDKSVRIIDPRRGTLVAEREKAHEGARPMRAIFLADGKVFTTGFSRMSERQLALWDPENLEEPMALQELDSSNGALLPFYDPDTSVVYVCGKGDSSIRYFEITDEPPYIHFLNTFTSKEPQRGVGSMPKRGLEVSKCEIARFYKLHERKCEPIVMTVPRKSDLFQDDLYPDTAGPEAALEAEEWVSGRDAGPVLISLREAYVPSKQRDLKVSRRNVLSDSRPTSAARPAAPAPAAPAPAAAASSSLSGAGEAGKLEEVMRELRALRALVKEQGERIGRLEEQLGRVENGDA.

Serine 2 carries the post-translational modification Phosphoserine; by PKC. 5 WD repeats span residues 80–120 (GHTG…LTSP), 130–170 (GHTK…ELYR), 174–213 (LHPDLIYNVSWNRNGSLFCSACKDKSVRIIDPRRGTLVAE), 217–260 (AHEG…EPMA), and 265–305 (DSSN…PYIH). The interval 404–444 (LKVSRRNVLSDSRPTSAARPAAPAPAAPAPAAAASSSLSGA) is disordered. The span at 432 to 444 (APAAAASSSLSGA) shows a compositional bias: low complexity. The stretch at 446–484 (EAGKLEEVMRELRALRALVKEQGERIGRLEEQLGRVENG) forms a coiled coil.

Belongs to the WD repeat coronin family. As to quaternary structure, forms homooligomers, but does not form complexes with the other coronins. Interacts with Arp2/3 complex components, including ACTR2, ARPC1B and ARPC2. Binds actin. Phosphorylated in vivo by PKC in response to cholinergic stimulation. Phosphorylation on Ser-2 regulates the interaction with the Arp2/3 complex and cell motility in fibroblasts. Phosphorylation does not seem to affect subcellular location.

It localises to the cytoplasm. It is found in the cytoskeleton. The protein resides in the stress fiber. In terms of biological role, regulates leading edge dynamics and cell motility in fibroblasts. May be involved in cytokinesis and signal transduction. The polypeptide is Coronin-1B (CORO1B) (Oryctolagus cuniculus (Rabbit)).